Consider the following 138-residue polypeptide: Large ribosomal subunit protein uL16 (138 aa).

It belongs to the universal ribosomal protein uL16 family. Part of the 50S ribosomal subunit.

Binds 23S rRNA and is also seen to make contacts with the A and possibly P site tRNAs. This Mycoplasmoides gallisepticum (strain R(low / passage 15 / clone 2)) (Mycoplasma gallisepticum) protein is Large ribosomal subunit protein uL16.